The chain runs to 309 residues: MIYLAEGCFWGVEEYFSQVDGVLDAVSGYANGRGDTTNYQLIHQTGHAETVEVTYDANRISLKELLLHFFRIIDPTSLNKQGNDRGSQYRTGIYYTDKADLAIIDEVFKEKAKDYKKKIVVEKAPLKHFIKAEEYHQDYLKKNPNGYCHIDINQATYPVIDESKYPKPSATEIKAKLSADEYRVTQKNETEKAFSNRYWDSFDAGIYVDVVTGEPLFSSKDKFESGCGWPSFSRPISPDVVRYKEDKSFNMTRTEVRSRSGNSHLGHVFTDGPKDQGGLRYCINSLSITFIPKADMEAKGYGYLLSSVE.

The segment at 1–153 (MIYLAEGCFW…PNGYCHIDIN (153 aa)) is peptide methionine sulfoxide reductase A. Residue Cys-8 is part of the active site. The region spanning 170-293 (ATEIKAKLSA…NSLSITFIPK (124 aa)) is the MsrB domain. The Nucleophile role is filled by Cys-282.

It in the N-terminal section; belongs to the MsrA Met sulfoxide reductase family. This sequence in the C-terminal section; belongs to the MsrB Met sulfoxide reductase family.

The enzyme catalyses L-methionyl-[protein] + [thioredoxin]-disulfide + H2O = L-methionyl-(S)-S-oxide-[protein] + [thioredoxin]-dithiol. It catalyses the reaction [thioredoxin]-disulfide + L-methionine + H2O = L-methionine (S)-S-oxide + [thioredoxin]-dithiol. It carries out the reaction L-methionyl-[protein] + [thioredoxin]-disulfide + H2O = L-methionyl-(R)-S-oxide-[protein] + [thioredoxin]-dithiol. Functionally, has an important function as a repair enzyme for proteins that have been inactivated by oxidation. Catalyzes the reversible oxidation-reduction of methionine sulfoxide in proteins to methionine. The protein is Peptide methionine sulfoxide reductase MsrA/MsrB (msrAB) of Streptococcus pyogenes serotype M3 (strain ATCC BAA-595 / MGAS315).